The sequence spans 360 residues: uncharacterized protein (360 aa).

The THUMP domain occupies 45–148 (EDIEDKILQI…KNKTYVSITP (104 aa)).

This is an uncharacterized protein from Methanocaldococcus jannaschii (strain ATCC 43067 / DSM 2661 / JAL-1 / JCM 10045 / NBRC 100440) (Methanococcus jannaschii).